A 143-amino-acid chain; its full sequence is Large ribosomal subunit protein uL11 (143 aa).

Belongs to the universal ribosomal protein uL11 family. In terms of assembly, part of the ribosomal stalk of the 50S ribosomal subunit. Interacts with L10 and the large rRNA to form the base of the stalk. L10 forms an elongated spine to which L12 dimers bind in a sequential fashion forming a multimeric L10(L12)X complex. In terms of processing, one or more lysine residues are methylated.

In terms of biological role, forms part of the ribosomal stalk which helps the ribosome interact with GTP-bound translation factors. This Psychrobacter cryohalolentis (strain ATCC BAA-1226 / DSM 17306 / VKM B-2378 / K5) protein is Large ribosomal subunit protein uL11.